We begin with the raw amino-acid sequence, 882 residues long: DNA mismatch repair protein MutS (882 aa).

635–642 (GPNMGGKS) is an ATP binding site.

It belongs to the DNA mismatch repair MutS family.

This protein is involved in the repair of mismatches in DNA. It is possible that it carries out the mismatch recognition step. This protein has a weak ATPase activity. This Janthinobacterium sp. (strain Marseille) (Minibacterium massiliensis) protein is DNA mismatch repair protein MutS.